A 382-amino-acid chain; its full sequence is V-type proton ATPase subunit C 1 (382 aa).

Thr-2 carries the N-acetylthreonine modification.

The protein belongs to the V-ATPase C subunit family. In terms of assembly, V-ATPase is a heteromultimeric enzyme made up of two complexes: the ATP-hydrolytic V1 complex and the proton translocation V0 complex. The V1 complex consists of three catalytic AB heterodimers that form a heterohexamer, three peripheral stalks each consisting of EG heterodimers, one central rotor including subunits D and F, and the regulatory subunits C and H. The proton translocation complex V0 consists of the proton transport subunit a, a ring of proteolipid subunits c9c'', rotary subunit d, subunits e and f, and the accessory subunits ATP6AP1/Ac45 and ATP6AP2/PRR. In terms of tissue distribution, ubiquitous. Abundant in brain, liver, kidney and testis.

The protein localises to the cytoplasmic vesicle. It is found in the secretory vesicle. Its subcellular location is the synaptic vesicle membrane. The protein resides in the clathrin-coated vesicle membrane. In terms of biological role, subunit of the V1 complex of vacuolar(H+)-ATPase (V-ATPase), a multisubunit enzyme composed of a peripheral complex (V1) that hydrolyzes ATP and a membrane integral complex (V0) that translocates protons. V-ATPase is responsible for acidifying and maintaining the pH of intracellular compartments and in some cell types, is targeted to the plasma membrane, where it is responsible for acidifying the extracellular environment. Subunit C is necessary for the assembly of the catalytic sector of the enzyme and is likely to have a specific function in its catalytic activity. The polypeptide is V-type proton ATPase subunit C 1 (Atp6v1c1) (Mus musculus (Mouse)).